We begin with the raw amino-acid sequence, 76 residues long: MKKNIILNLIGLRCPEPIMIIRKTIRDMKDNEKILILSDDPATKRDIPNFCYFMEHKLLKNEIKVKPYRYLLKKGL.

Cys-14 serves as the catalytic Cysteine persulfide intermediate.

Belongs to the sulfur carrier protein TusA family. In terms of assembly, interacts with IscS.

The protein resides in the cytoplasm. It functions in the pathway tRNA modification. Functionally, sulfur carrier protein involved in sulfur trafficking in the cell. Part of a sulfur-relay system required for 2-thiolation during synthesis of 2-thiouridine of the modified wobble base 5-methylaminomethyl-2-thiouridine (mnm(5)s(2)U) in tRNA. Interacts with IscS and stimulates its cysteine desulfurase activity. Accepts an activated sulfur from IscS, which is then transferred to TusD, and thus determines the direction of sulfur flow from IscS to 2-thiouridine formation. Also appears to be involved in sulfur transfer for the biosynthesis of molybdopterin. The polypeptide is Sulfur carrier protein TusA (Buchnera aphidicola subsp. Acyrthosiphon pisum (strain 5A)).